The sequence spans 338 residues: Holliday junction branch migration complex subunit RuvB (338 aa).

The large ATPase domain (RuvB-L) stretch occupies residues 1–179 (MTDLTTPIRT…FGIPVRLNFY (179 aa)). The ATP site is built by leucine 18, arginine 19, glycine 60, lysine 63, threonine 64, threonine 65, arginine 169, tyrosine 179, and arginine 216. Threonine 64 contacts Mg(2+). The segment at 180 to 250 (THAELEQVIG…AADAALNRLE (71 aa)) is small ATPAse domain (RuvB-S). Positions 253 to 338 (ALGLDAMDRR…AGSQDGLFDK (86 aa)) are head domain (RuvB-H). Residues arginine 289, arginine 308, and arginine 313 each contribute to the DNA site.

Belongs to the RuvB family. In terms of assembly, homohexamer. Forms an RuvA(8)-RuvB(12)-Holliday junction (HJ) complex. HJ DNA is sandwiched between 2 RuvA tetramers; dsDNA enters through RuvA and exits via RuvB. An RuvB hexamer assembles on each DNA strand where it exits the tetramer. Each RuvB hexamer is contacted by two RuvA subunits (via domain III) on 2 adjacent RuvB subunits; this complex drives branch migration. In the full resolvosome a probable DNA-RuvA(4)-RuvB(12)-RuvC(2) complex forms which resolves the HJ.

The protein localises to the cytoplasm. It carries out the reaction ATP + H2O = ADP + phosphate + H(+). Its function is as follows. The RuvA-RuvB-RuvC complex processes Holliday junction (HJ) DNA during genetic recombination and DNA repair, while the RuvA-RuvB complex plays an important role in the rescue of blocked DNA replication forks via replication fork reversal (RFR). RuvA specifically binds to HJ cruciform DNA, conferring on it an open structure. The RuvB hexamer acts as an ATP-dependent pump, pulling dsDNA into and through the RuvAB complex. RuvB forms 2 homohexamers on either side of HJ DNA bound by 1 or 2 RuvA tetramers; 4 subunits per hexamer contact DNA at a time. Coordinated motions by a converter formed by DNA-disengaged RuvB subunits stimulates ATP hydrolysis and nucleotide exchange. Immobilization of the converter enables RuvB to convert the ATP-contained energy into a lever motion, pulling 2 nucleotides of DNA out of the RuvA tetramer per ATP hydrolyzed, thus driving DNA branch migration. The RuvB motors rotate together with the DNA substrate, which together with the progressing nucleotide cycle form the mechanistic basis for DNA recombination by continuous HJ branch migration. Branch migration allows RuvC to scan DNA until it finds its consensus sequence, where it cleaves and resolves cruciform DNA. This is Holliday junction branch migration complex subunit RuvB from Sphingopyxis alaskensis (strain DSM 13593 / LMG 18877 / RB2256) (Sphingomonas alaskensis).